The following is a 242-amino-acid chain: Methylthioribulose-1-phosphate dehydratase (242 aa).

Cys97 lines the substrate pocket. Positions 115 and 117 each coordinate Zn(2+). Glu139 functions as the Proton donor/acceptor in the catalytic mechanism. His195 contributes to the Zn(2+) binding site.

This sequence belongs to the aldolase class II family. MtnB subfamily. Homotetramer. Interacts with APAF1. May interact with CASP1. Zn(2+) is required as a cofactor.

It localises to the cytoplasm. The enzyme catalyses 5-(methylsulfanyl)-D-ribulose 1-phosphate = 5-methylsulfanyl-2,3-dioxopentyl phosphate + H2O. It functions in the pathway amino-acid biosynthesis; L-methionine biosynthesis via salvage pathway; L-methionine from S-methyl-5-thio-alpha-D-ribose 1-phosphate: step 2/6. In terms of biological role, catalyzes the dehydration of methylthioribulose-1-phosphate (MTRu-1-P) into 2,3-diketo-5-methylthiopentyl-1-phosphate (DK-MTP-1-P). Functions in the methionine salvage pathway, which plays a key role in cancer, apoptosis, microbial proliferation and inflammation. May inhibit the CASP1-related inflammatory response (pyroptosis), the CASP9-dependent apoptotic pathway and the cytochrome c-dependent and APAF1-mediated cell death. This chain is Methylthioribulose-1-phosphate dehydratase, found in Bos taurus (Bovine).